The sequence spans 266 residues: Thymidylate synthase (266 aa).

Position 24 (arginine 24) interacts with dUMP. Histidine 54 contributes to the (6R)-5,10-methylene-5,6,7,8-tetrahydrofolate binding site. 129-130 (RR) contributes to the dUMP binding site. Catalysis depends on cysteine 149, which acts as the Nucleophile. DUMP-binding positions include 169 to 172 (RSAD), asparagine 180, and 210 to 212 (HIY). Residue aspartate 172 coordinates (6R)-5,10-methylene-5,6,7,8-tetrahydrofolate. Alanine 265 serves as a coordination point for (6R)-5,10-methylene-5,6,7,8-tetrahydrofolate.

This sequence belongs to the thymidylate synthase family. Bacterial-type ThyA subfamily. Homodimer.

The protein localises to the cytoplasm. It carries out the reaction dUMP + (6R)-5,10-methylene-5,6,7,8-tetrahydrofolate = 7,8-dihydrofolate + dTMP. Its pathway is pyrimidine metabolism; dTTP biosynthesis. Functionally, catalyzes the reductive methylation of 2'-deoxyuridine-5'-monophosphate (dUMP) to 2'-deoxythymidine-5'-monophosphate (dTMP) while utilizing 5,10-methylenetetrahydrofolate (mTHF) as the methyl donor and reductant in the reaction, yielding dihydrofolate (DHF) as a by-product. This enzymatic reaction provides an intracellular de novo source of dTMP, an essential precursor for DNA biosynthesis. This chain is Thymidylate synthase, found in Mycobacterium leprae (strain TN).